Here is a 453-residue protein sequence, read N- to C-terminus: Ribosomal protein uS12 methylthiotransferase RimO (453 aa).

The MTTase N-terminal domain occupies 6–116 (PKVGFVSLGC…VMEAVHEALP (111 aa)). 6 residues coordinate [4Fe-4S] cluster: Cys15, Cys51, Cys80, Cys147, Cys151, and Cys154. The Radical SAM core domain maps to 133 to 370 (LTPRHYAYLK…MEKQAQISAA (238 aa)). One can recognise a TRAM domain in the interval 373–441 (EAKIGTVQQC…DHDLYGDALP (69 aa)).

This sequence belongs to the methylthiotransferase family. RimO subfamily. [4Fe-4S] cluster serves as cofactor.

It is found in the cytoplasm. The enzyme catalyses L-aspartate(89)-[ribosomal protein uS12]-hydrogen + (sulfur carrier)-SH + AH2 + 2 S-adenosyl-L-methionine = 3-methylsulfanyl-L-aspartate(89)-[ribosomal protein uS12]-hydrogen + (sulfur carrier)-H + 5'-deoxyadenosine + L-methionine + A + S-adenosyl-L-homocysteine + 2 H(+). Catalyzes the methylthiolation of an aspartic acid residue of ribosomal protein uS12. This chain is Ribosomal protein uS12 methylthiotransferase RimO, found in Stenotrophomonas maltophilia (strain R551-3).